The sequence spans 323 residues: Phospho-N-acetylmuramoyl-pentapeptide-transferase (323 aa).

The next 9 membrane-spanning stretches (helical) occupy residues 12–32, 58–78, 84–104, 120–140, 151–171, 177–197, 200–220, 229–250, and 303–323; these read IVMA…IIIP, PTIG…IMVG, AMIA…DDLL, MILL…YIGT, INFG…VTNA, GLDG…GIIS, LGHI…LAFL, VFMG…ALIL, and KIVS…FASL.

It belongs to the glycosyltransferase 4 family. MraY subfamily. It depends on Mg(2+) as a cofactor.

Its subcellular location is the cell membrane. It catalyses the reaction UDP-N-acetyl-alpha-D-muramoyl-L-alanyl-gamma-D-glutamyl-meso-2,6-diaminopimeloyl-D-alanyl-D-alanine + di-trans,octa-cis-undecaprenyl phosphate = di-trans,octa-cis-undecaprenyl diphospho-N-acetyl-alpha-D-muramoyl-L-alanyl-D-glutamyl-meso-2,6-diaminopimeloyl-D-alanyl-D-alanine + UMP. The protein operates within cell wall biogenesis; peptidoglycan biosynthesis. Its function is as follows. Catalyzes the initial step of the lipid cycle reactions in the biosynthesis of the cell wall peptidoglycan: transfers peptidoglycan precursor phospho-MurNAc-pentapeptide from UDP-MurNAc-pentapeptide onto the lipid carrier undecaprenyl phosphate, yielding undecaprenyl-pyrophosphoryl-MurNAc-pentapeptide, known as lipid I. This chain is Phospho-N-acetylmuramoyl-pentapeptide-transferase, found in Clostridium perfringens (strain ATCC 13124 / DSM 756 / JCM 1290 / NCIMB 6125 / NCTC 8237 / Type A).